Consider the following 176-residue polypeptide: R-phycoerythrin beta chain (176 aa).

Residues C50 and C61 each contribute to the phycourobilin site. N72 is modified (N4-methylasparagine). C82 and C158 together coordinate (2R,3E)-phycoerythrobilin.

Belongs to the phycobiliprotein family. Heterodimer of an alpha and a beta chain. In terms of processing, contains two covalently linked phycoerythrobilin chromophores and one covalently linked phycourobilin chromophore.

It localises to the plastid. The protein localises to the chloroplast thylakoid membrane. Light-harvesting photosynthetic bile pigment-protein from the phycobiliprotein complex. The sequence is that of R-phycoerythrin beta chain (cpeB) from Aglaothamnion neglectum (Red alga).